The following is a 68-amino-acid chain: Putative membrane protein insertion efficiency factor (68 aa).

It belongs to the UPF0161 family.

The protein localises to the cell inner membrane. Its function is as follows. Could be involved in insertion of integral membrane proteins into the membrane. The polypeptide is Putative membrane protein insertion efficiency factor (Hydrogenobaculum sp. (strain Y04AAS1)).